A 745-amino-acid chain; its full sequence is MATTATRFPQFSQDLASDPTTRRLWYGIATAHDFETHDGMTEERLYQKLFATHFGHLAIIFLWASGNVFHIAWQGNYEQWVANPTGVTPIAHAIWDPQFGKAAVEAFTQPGGGGPVNAAYSGLYYWFNTIGLRTNGDLYAGAIGLLLLAAVFLFAGWLHLQPRFRPSLSWFKNAEARLNHHLAGLFGVSSLAWAGHLVHVAIPESRGQHVGWDNFLTTLPHPAGLKPFFTLNWGVYAQNPDTANHVWGTAEGAGTAILTFLGGFNPNTQSLWLTDMAHHHLAIAVIFIVAGHMYRTNWGIGHSIREILGAHNPPKGTPFGGLLGEGHRGLYDTVNNSLHFQLALALACLGVVTSLVAQHMYALNPYVFMSMDHTTEAALYTHHQYIAGFLMVGAFAHGAIFLVRDYDPEANKNNVLARVLDHKEAIISHLSWVSLFLGFHTLGLYVHNDVMQAFGTPEKQILIEPVFAQFIQASHGKMIYGMDVLLSNPDSIASTAWPNYGNVWLPGWLQAINDPNGFLFLPIGPGDFLVHHAIALGLHTTTLILVKGALDARGSKLMPDKKDFGYSFPCDGPGRGGTCDISAWDAFYLAMFWMLNTIGWVTFYWHWKHLGIWSGNTAQFNENSTYLMGWLRDYLWANSAQLINGYNPYGMNNLAVWAWMFLFGHLVWATGFMFLISWRGYWQELIETLVWAHERTPLANLIRWKDKPVALSIVQGRLVGLAHFTVGYVLTYAAFVIASTASLSG.

A run of 8 helical transmembrane segments spans residues 49–72 (LFAT…FHIA), 138–161 (LYAG…LHLQ), 178–202 (LNHH…HVAI), 276–294 (MAHH…GHMY), 338–361 (LHFQ…QHMY), 377–403 (AALY…IFLV), 425–447 (AIIS…LYVH), and 528–546 (FLVH…LILV). Cys570 and Cys579 together coordinate [4Fe-4S] cluster. 2 helical membrane-spanning segments follow: residues 586–607 (AFYL…YWHW) and 654–676 (LAVW…MFLI). The chlorophyll a site is built by His665, Met673, and Tyr681. Trp682 is a phylloquinone binding site. Residues 718–738 (LVGLAHFTVGYVLTYAAFVIA) traverse the membrane as a helical segment.

The protein belongs to the PsaA/PsaB family. The PsaA/B heterodimer binds the P700 chlorophyll special pair and subsequent electron acceptors. PSI consists of a core antenna complex that captures photons, and an electron transfer chain that converts photonic excitation into a charge separation. The cyanobacterial PSI reaction center is composed of one copy each of PsaA,B,C,D,E,F,I,J,K,L,M and X, and forms trimeric complexes. It depends on PSI electron transfer chain: 5 chlorophyll a, 1 chlorophyll a', 2 phylloquinones and 3 4Fe-4S clusters. PSI core antenna: 90 chlorophyll a, 22 carotenoids, 3 phospholipids and 1 galactolipid. P700 is a chlorophyll a/chlorophyll a' dimer, A0 is one or more chlorophyll a, A1 is one or both phylloquinones and FX is a shared 4Fe-4S iron-sulfur center. as a cofactor.

It is found in the cellular thylakoid membrane. The enzyme catalyses reduced [plastocyanin] + hnu + oxidized [2Fe-2S]-[ferredoxin] = oxidized [plastocyanin] + reduced [2Fe-2S]-[ferredoxin]. Its function is as follows. PsaA and PsaB bind P700, the primary electron donor of photosystem I (PSI), as well as the electron acceptors A0, A1 and FX. PSI is a plastocyanin/cytochrome c6-ferredoxin oxidoreductase, converting photonic excitation into a charge separation, which transfers an electron from the donor P700 chlorophyll pair to the spectroscopically characterized acceptors A0, A1, FX, FA and FB in turn. Oxidized P700 is reduced on the lumenal side of the thylakoid membrane by plastocyanin or cytochrome c6. This is Photosystem I P700 chlorophyll a apoprotein A2 from Synechococcus sp. (strain JA-3-3Ab) (Cyanobacteria bacterium Yellowstone A-Prime).